Reading from the N-terminus, the 336-residue chain is MRIAVVCNSAFTGVINRFGQPYPQPPQPWPQGRIADSVVAALQECGHETLLCEGDKGLLTTLERFMPPDPLARTSGMVFNLAEGIQGEYRFTHVPAMLEMAGVPYTGSSPLGHGLTDDKVISKTLMRDSGVPTPNFSIMRRGTESTDDLRFPVVVKPRHEDNSFGLQLVHEPAQLQQAVKMIVTKYAQDALVEEYIDGREIHVALLGNQEVEVLPMVEFELGEHEAPLLTWEAKYLAAVQPPKTCPAKIESKLATLLRDISVATFRACQCRDYARVDLRLDRSGQPFVLEINSMPGLSTHSAYVLAAMTAGHSYSSLINGILDVAHRRYFGNGILG.

One can recognise an ATP-grasp domain in the interval 123-323 (KTLMRDSGVP…YSSLINGILD (201 aa)).

It belongs to the D-alanine--D-alanine ligase family.

Could be involved in the biosynthesis of a cell wall component. This is an uncharacterized protein from Sinorhizobium fredii (strain NBRC 101917 / NGR234).